Consider the following 354-residue polypeptide: Abasic site processing protein HMCES (354 aa).

The active-site Nucleophile is the Cys-2. A Thiazolidine linkage to a ring-opened DNA abasic site modification is found at Cys-2. Glu-127 is an active-site residue. Residues Lys-148 and Lys-151 each participate in a glycyl lysine isopeptide (Lys-Gly) (interchain with G-Cter in SUMO2) cross-link. Ser-160 is subject to Phosphoserine. Lys-276 is covalently cross-linked (Glycyl lysine isopeptide (Lys-Gly) (interchain with G-Cter in SUMO2)). The tract at residues Ala-292–Gln-354 is disordered. A Phosphoserine modification is found at Ser-295. The segment covering Pro-296–Ser-309 has biased composition (basic and acidic residues). Lys-306 participates in a covalent cross-link: Glycyl lysine isopeptide (Lys-Gly) (interchain with G-Cter in SUMO2). Ser-322 carries the phosphoserine modification. The PIP-box signature appears at Gly-332–Leu-338. Residues Trp-337–Ala-348 show a composition bias toward basic and acidic residues. Glycyl lysine isopeptide (Lys-Gly) (interchain with G-Cter in SUMO2) cross-links involve residues Lys-339 and Lys-342.

It belongs to the SOS response-associated peptidase family. Interacts (via PIP-box motif) with PCNA. Post-translationally, ubiquitinated; the covalent HMCES DNA-protein cross-link is ubiquitinated, leading to its degradation by the proteasome.

It localises to the chromosome. Its activity is regulated as follows. Formation and reversal of DNA-protein cross-link depends on DNA context. Catalyzes formation of the thiazolidine linkage in presence of abasic sites in single-stranded DNA. Mediates the reversal of the thiazolidine cross-link in presence of double stranded DNA. In terms of biological role, sensor of abasic sites in single-stranded DNA (ssDNA) required to preserve genome integrity by promoting error-free repair of abasic sites. Acts as an enzyme that recognizes and binds abasic sites in ssDNA at replication forks and chemically modifies the lesion by forming a covalent cross-link with DNA: forms a stable thiazolidine linkage between a ring-opened abasic site and the alpha-amino and sulfhydryl substituents of its N-terminal catalytic cysteine residue. Promotes error-free repair by protecting abasic sites from translesion synthesis (TLS) polymerases and endonucleases that are error-prone and would generate mutations and double-strand breaks. The HMCES DNA-protein cross-link is then either reversed or degraded. HMCES is able to catalyze the reversal of its thiazolidine cross-link and cycle between a cross-link and a non-cross-linked state depending on DNA context: mediates self-reversal of the thiazolidine cross-link in double stranded DNA, allowing APEX1 to initiate downstream repair of abasic sites. The HMCES DNA-protein cross-link can also be degraded by the SPRTN metalloprotease following unfolding by the BRIP1/FANCJ helicase. Has preference for ssDNA, but can also accommodate double-stranded DNA with 3' or 5' overhang (dsDNA), and dsDNA-ssDNA 3' junction. Plays a protective role during somatic hypermutation of immunoglobulin genes in B-cells: acts via its ability to form covalent cross-links with abasic sites, thereby limiting the accumulation of deletions in somatic hypermutation target regions. Also involved in class switch recombination (CSR) in B-cells independently of the formation of a DNA-protein cross-link: acts by binding and protecting ssDNA overhangs to promote DNA double-strand break repair through the microhomology-mediated alternative-end-joining (Alt-EJ) pathway. Acts as a protease: mediates autocatalytic processing of its N-terminal methionine in order to expose the catalytic cysteine. The polypeptide is Abasic site processing protein HMCES (Pongo abelii (Sumatran orangutan)).